A 258-amino-acid polypeptide reads, in one-letter code: Shikimate dehydrogenase (NADP(+)) (258 aa).

Shikimate-binding positions include 14–16 and Thr61; that span reads SES. Lys65 serves as the catalytic Proton acceptor. 2 residues coordinate shikimate: Asn86 and Asp101. Residues 125-129 and Leu211 each bind NADP(+); that span reads GSGGS. Tyr213 lines the shikimate pocket. Gly234 contacts NADP(+).

The protein belongs to the shikimate dehydrogenase family. As to quaternary structure, homodimer.

The enzyme catalyses shikimate + NADP(+) = 3-dehydroshikimate + NADPH + H(+). It participates in metabolic intermediate biosynthesis; chorismate biosynthesis; chorismate from D-erythrose 4-phosphate and phosphoenolpyruvate: step 4/7. In terms of biological role, involved in the biosynthesis of the chorismate, which leads to the biosynthesis of aromatic amino acids. Catalyzes the reversible NADPH linked reduction of 3-dehydroshikimate (DHSA) to yield shikimate (SA). This is Shikimate dehydrogenase (NADP(+)) from Clostridium botulinum (strain ATCC 19397 / Type A).